Here is a 106-residue protein sequence, read N- to C-terminus: uncharacterized protein (106 aa).

Residues 9-27 (ALAALAFTLGLIGLAAWAL) form a helical membrane-spanning segment. A disordered region spans residues 84–106 (TPKGPPPASALSPSPVAEPEPVV).

Belongs to the FliO/MopB family.

Its subcellular location is the cell membrane. The protein localises to the bacterial flagellum basal body. This is an uncharacterized protein from Caulobacter vibrioides (strain ATCC 19089 / CIP 103742 / CB 15) (Caulobacter crescentus).